Reading from the N-terminus, the 260-residue chain is Putative ABC transporter ATP-binding protein PYRAB01300 (260 aa).

The 233-residue stretch at 2–234 folds into the ABC transporter domain; the sequence is IEFKDVWFWY…DLRNFSLVEP (233 aa). ATP is bound at residue 34–41; the sequence is GPNGSGKT.

Belongs to the ABC transporter superfamily.

Its subcellular location is the cell membrane. Functionally, probably part of an ABC transporter complex. Responsible for energy coupling to the transport system. In Pyrococcus abyssi (strain GE5 / Orsay), this protein is Putative ABC transporter ATP-binding protein PYRAB01300.